We begin with the raw amino-acid sequence, 419 residues long: L-rhamnose isomerase (419 aa).

3 residues coordinate Mn(2+): His262, Asp294, and Asp296.

The protein belongs to the rhamnose isomerase family. In terms of assembly, homotetramer. It depends on Mn(2+) as a cofactor.

The protein resides in the cytoplasm. The catalysed reaction is L-rhamnopyranose = L-rhamnulose. It functions in the pathway carbohydrate degradation; L-rhamnose degradation; glycerone phosphate from L-rhamnose: step 1/3. Its function is as follows. Catalyzes the interconversion of L-rhamnose and L-rhamnulose. This Escherichia coli O45:K1 (strain S88 / ExPEC) protein is L-rhamnose isomerase.